A 361-amino-acid chain; its full sequence is Molybdenum import ATP-binding protein ModC (361 aa).

The ABC transporter domain maps to 1–228 (MLNINIEKQL…EQMRPWVPLQ (228 aa)). 31–38 (GRSGAGKT) lines the ATP pocket. In terms of domain architecture, Mop spans 289-356 (GSSVRNLLRG…IKGVTMTQMD (68 aa)).

It belongs to the ABC transporter superfamily. Molybdate importer (TC 3.A.1.8) family. The complex is composed of two ATP-binding proteins (ModC), two transmembrane proteins (ModB) and a solute-binding protein (ModA).

It is found in the cell inner membrane. It catalyses the reaction molybdate(out) + ATP + H2O = molybdate(in) + ADP + phosphate + H(+). Functionally, part of the ABC transporter complex ModABC involved in molybdenum import. Responsible for energy coupling to the transport system. The polypeptide is Molybdenum import ATP-binding protein ModC (Shewanella sp. (strain MR-7)).